Consider the following 353-residue polypeptide: Sorbitol dehydrogenase (353 aa).

Cys45 is a Zn(2+) binding site. Tyr51 contacts substrate. 2 residues coordinate Zn(2+): His70 and Glu71. Glu156 serves as a coordination point for substrate. NAD(+) contacts are provided by residues Val184, Asp204, Arg209, 271 to 273 (VGL), and 296 to 298 (IFR). Residues Arg298 and Tyr299 each contribute to the substrate site.

It belongs to the zinc-containing alcohol dehydrogenase family. In terms of assembly, homotetramer. Zn(2+) is required as a cofactor.

It carries out the reaction keto-D-fructose + NADH + H(+) = D-sorbitol + NAD(+). The catalysed reaction is xylitol + NAD(+) = D-xylulose + NADH + H(+). It catalyses the reaction L-iditol + NAD(+) = keto-L-sorbose + NADH + H(+). In terms of biological role, polyol dehydrogenase that catalyzes the NAD(+)-dependent oxidation of various sugar alcohols. Is mostly active with D-sorbitol (D-glucitol), xylitol and L-iditol as substrates, leading to the C2-oxidized products D-fructose, D-xylulose and L-sorbose, respectively. The sequence is that of Sorbitol dehydrogenase from Bacillus subtilis (strain 168).